The primary structure comprises 310 residues: Aspartate carbamoyltransferase catalytic subunit (310 aa).

Residues R55 and T56 each coordinate carbamoyl phosphate. K85 provides a ligand contact to L-aspartate. Residues R106, H135, and Q138 each contribute to the carbamoyl phosphate site. L-aspartate is bound by residues R168 and R230. Carbamoyl phosphate is bound by residues L268 and P269.

This sequence belongs to the aspartate/ornithine carbamoyltransferase superfamily. ATCase family. Heterododecamer (2C3:3R2) of six catalytic PyrB chains organized as two trimers (C3), and six regulatory PyrI chains organized as three dimers (R2).

It carries out the reaction carbamoyl phosphate + L-aspartate = N-carbamoyl-L-aspartate + phosphate + H(+). The protein operates within pyrimidine metabolism; UMP biosynthesis via de novo pathway; (S)-dihydroorotate from bicarbonate: step 2/3. Functionally, catalyzes the condensation of carbamoyl phosphate and aspartate to form carbamoyl aspartate and inorganic phosphate, the committed step in the de novo pyrimidine nucleotide biosynthesis pathway. The polypeptide is Aspartate carbamoyltransferase catalytic subunit (Buchnera aphidicola subsp. Acyrthosiphon pisum (strain 5A)).